Reading from the N-terminus, the 95-residue chain is Co-chaperonin GroES (95 aa).

The protein belongs to the GroES chaperonin family. Heptamer of 7 subunits arranged in a ring. Interacts with the chaperonin GroEL.

It is found in the cytoplasm. Functionally, together with the chaperonin GroEL, plays an essential role in assisting protein folding. The GroEL-GroES system forms a nano-cage that allows encapsulation of the non-native substrate proteins and provides a physical environment optimized to promote and accelerate protein folding. GroES binds to the apical surface of the GroEL ring, thereby capping the opening of the GroEL channel. The sequence is that of Co-chaperonin GroES from Cereibacter sphaeroides (strain KD131 / KCTC 12085) (Rhodobacter sphaeroides).